The following is a 640-amino-acid chain: Biosynthetic arginine decarboxylase (640 aa).

Position 105 is an N6-(pyridoxal phosphate)lysine (lysine 105). 290 to 300 (FDVGGGLAIDY) is a substrate binding site.

This sequence belongs to the Orn/Lys/Arg decarboxylase class-II family. SpeA subfamily. Requires Mg(2+) as cofactor. It depends on pyridoxal 5'-phosphate as a cofactor.

It catalyses the reaction L-arginine + H(+) = agmatine + CO2. Functionally, catalyzes the biosynthesis of agmatine from arginine. This is Biosynthetic arginine decarboxylase from Vibrio vulnificus (strain CMCP6).